The following is a 544-amino-acid chain: Chaperonin GroEL (544 aa).

ATP-binding positions include 29-32 (TMGP), lysine 50, 86-90 (DGTTT), glycine 414, 477-479 (NAA), and aspartate 493. The tract at residues 525–544 (DKPAMPSMPDMGGMGMPGMM) is disordered.

This sequence belongs to the chaperonin (HSP60) family. In terms of assembly, forms a cylinder of 14 subunits composed of two heptameric rings stacked back-to-back. Interacts with the co-chaperonin GroES.

Its subcellular location is the cytoplasm. It carries out the reaction ATP + H2O + a folded polypeptide = ADP + phosphate + an unfolded polypeptide.. In terms of biological role, together with its co-chaperonin GroES, plays an essential role in assisting protein folding. The GroEL-GroES system forms a nano-cage that allows encapsulation of the non-native substrate proteins and provides a physical environment optimized to promote and accelerate protein folding. The polypeptide is Chaperonin GroEL (Aliarcobacter butzleri (strain RM4018) (Arcobacter butzleri)).